The primary structure comprises 423 residues: Gamma-glutamyl phosphate reductase (423 aa).

This sequence belongs to the gamma-glutamyl phosphate reductase family.

Its subcellular location is the cytoplasm. It catalyses the reaction L-glutamate 5-semialdehyde + phosphate + NADP(+) = L-glutamyl 5-phosphate + NADPH + H(+). It participates in amino-acid biosynthesis; L-proline biosynthesis; L-glutamate 5-semialdehyde from L-glutamate: step 2/2. Catalyzes the NADPH-dependent reduction of L-glutamate 5-phosphate into L-glutamate 5-semialdehyde and phosphate. The product spontaneously undergoes cyclization to form 1-pyrroline-5-carboxylate. This chain is Gamma-glutamyl phosphate reductase, found in Paracoccus denitrificans (strain Pd 1222).